A 327-amino-acid chain; its full sequence is Malate dehydrogenase (327 aa).

11-17 (GAAGNIS) is an NAD(+) binding site. Substrate-binding residues include Arg92 and Arg98. Residues Asn105, Gln112, and 129–131 (VGN) each bind NAD(+). Asn131 and Arg162 together coordinate substrate. The Proton acceptor role is filled by His187. Positions 304-327 (SQEKMKATEQELSEERDAVEHLLP) are disordered.

Belongs to the LDH/MDH superfamily. MDH type 2 family.

It catalyses the reaction (S)-malate + NAD(+) = oxaloacetate + NADH + H(+). In terms of biological role, catalyzes the reversible oxidation of malate to oxaloacetate. This Psychrobacter sp. (strain PRwf-1) protein is Malate dehydrogenase.